The sequence spans 492 residues: 3-octaprenyl-4-hydroxybenzoate carboxy-lyase (492 aa).

Asn177 is a Mn(2+) binding site. Prenylated FMN is bound by residues 180–182 (IYR), 194–196 (RWL), and 199–200 (RG). Mn(2+) is bound at residue Glu243. Residue Asp292 is the Proton donor of the active site.

It belongs to the UbiD family. In terms of assembly, homohexamer. Prenylated FMN serves as cofactor. It depends on Mn(2+) as a cofactor.

It is found in the cell membrane. It catalyses the reaction a 4-hydroxy-3-(all-trans-polyprenyl)benzoate + H(+) = a 2-(all-trans-polyprenyl)phenol + CO2. It participates in cofactor biosynthesis; ubiquinone biosynthesis. Its function is as follows. Catalyzes the decarboxylation of 3-octaprenyl-4-hydroxy benzoate to 2-octaprenylphenol, an intermediate step in ubiquinone biosynthesis. The chain is 3-octaprenyl-4-hydroxybenzoate carboxy-lyase from Neisseria meningitidis serogroup A / serotype 4A (strain DSM 15465 / Z2491).